The primary structure comprises 212 residues: Deoxyribose-phosphate aldolase (212 aa).

Residue D90 is the Proton donor/acceptor of the active site. The active-site Schiff-base intermediate with acetaldehyde is the K151. K176 acts as the Proton donor/acceptor in catalysis.

The protein belongs to the DeoC/FbaB aldolase family. DeoC type 1 subfamily.

Its subcellular location is the cytoplasm. The catalysed reaction is 2-deoxy-D-ribose 5-phosphate = D-glyceraldehyde 3-phosphate + acetaldehyde. The protein operates within carbohydrate degradation; 2-deoxy-D-ribose 1-phosphate degradation; D-glyceraldehyde 3-phosphate and acetaldehyde from 2-deoxy-alpha-D-ribose 1-phosphate: step 2/2. Catalyzes a reversible aldol reaction between acetaldehyde and D-glyceraldehyde 3-phosphate to generate 2-deoxy-D-ribose 5-phosphate. The protein is Deoxyribose-phosphate aldolase of Halobacterium salinarum (strain ATCC 29341 / DSM 671 / R1).